The primary structure comprises 214 residues: Proteasome subunit beta type-6 (214 aa).

Residues 1–14 constitute a propeptide, removed in mature form; the sequence is MEAPEWLDNAVDLG. Catalysis depends on Thr-15, which acts as the Nucleophile.

It belongs to the peptidase T1B family. In terms of assembly, the 26S proteasome consists of a 20S proteasome core and two 19S regulatory subunits. The 20S proteasome core is composed of 28 subunits that are arranged in four stacked rings, resulting in a barrel-shaped structure. The two end rings are each formed by seven alpha subunits, and the two central rings are each formed by seven beta subunits. The catalytic chamber with the active sites is on the inside of the barrel.

It localises to the cytoplasm. It is found in the nucleus. The catalysed reaction is Cleavage of peptide bonds with very broad specificity.. Its function is as follows. The proteasome is a multicatalytic proteinase complex which is characterized by its ability to cleave peptides with Arg, Phe, Tyr, Leu, and Glu adjacent to the leaving group at neutral or slightly basic pH. The proteasome has an ATP-dependent proteolytic activity. The protein is Proteasome subunit beta type-6 (psmB6) of Dictyostelium discoideum (Social amoeba).